A 331-amino-acid chain; its full sequence is uncharacterized protein (331 aa).

It belongs to the proline racemase family.

This is an uncharacterized protein from Bacillus anthracis.